Reading from the N-terminus, the 410-residue chain is Cytochrome P450 (410 aa).

Residue Cys-359 participates in heme binding.

The protein belongs to the cytochrome P450 family. Heme serves as cofactor.

The chain is Cytochrome P450 (cypA) from Bacillus subtilis (strain 168).